Here is an 89-residue protein sequence, read N- to C-terminus: MKKDIHPDYHPVVFKDAGTGHSFLTKSTATSDRTVEWEDGNEYPLIVVDVTAESHPFWTGAQRVMDTAGRVEKFNQRFGAMARRKKKNA.

It belongs to the bacterial ribosomal protein bL31 family. Type B subfamily. As to quaternary structure, part of the 50S ribosomal subunit.

This is Large ribosomal subunit protein bL31B from Corynebacterium aurimucosum (strain ATCC 700975 / DSM 44827 / CIP 107346 / CN-1) (Corynebacterium nigricans).